A 276-amino-acid polypeptide reads, in one-letter code: 4-deoxy-L-threo-5-hexosulose-uronate ketol-isomerase (276 aa).

Zn(2+) contacts are provided by His-194, His-196, Glu-201, and His-243.

It belongs to the KduI family. Zn(2+) is required as a cofactor.

The enzyme catalyses 5-dehydro-4-deoxy-D-glucuronate = 3-deoxy-D-glycero-2,5-hexodiulosonate. It functions in the pathway glycan metabolism; pectin degradation; 2-dehydro-3-deoxy-D-gluconate from pectin: step 4/5. Catalyzes the isomerization of 5-dehydro-4-deoxy-D-glucuronate to 3-deoxy-D-glycero-2,5-hexodiulosonate. In Halalkalibacterium halodurans (strain ATCC BAA-125 / DSM 18197 / FERM 7344 / JCM 9153 / C-125) (Bacillus halodurans), this protein is 4-deoxy-L-threo-5-hexosulose-uronate ketol-isomerase.